A 259-amino-acid polypeptide reads, in one-letter code: Pre-mRNA-splicing factor CWC24 (259 aa).

A disordered region spans residues 1 to 67; that stretch reads MFRKRLVNKS…HENEGKLQKK (67 aa). The span at 25–39 shows a compositional bias: basic and acidic residues; it reads FSEEKLVASDEEKGS. Phosphoserine is present on S33. Over residues 47 to 57 the composition is skewed to polar residues; that stretch reads KSGNSRTLQLS. Residues 58–67 are compositionally biased toward basic and acidic residues; it reads HENEGKLQKK. S105 is modified (phosphoserine). A C3H1-type zinc finger spans residues 138-166; that stretch reads DFQPDVCKDYKQTGYCGYGDSCKFLHSRD. An RING-type zinc finger spans residues 199–237; the sequence is CTLCKEDYKSPVVTNCGHYFCGSCFAKDMKKGTKCFICH.

It belongs to the CWC24 family. As to quaternary structure, belongs to the CWC complex (or CEF1-associated complex), a spliceosome sub-complex reminiscent of a late-stage spliceosome composed of the U2, U5 and U6 snRNAs and at least BUD13, BUD31, BRR2, CDC40, CEF1, CLF1, CUS1, CWC2, CWC15, CWC21, CWC22, CWC23, CWC24, CWC25, CWC27, ECM2, HSH155, IST3, ISY1, LEA1, MSL1, NTC20, PRP8, PRP9, PRP11, PRP19, PRP21, PRP22, PRP45, PRP46, SLU7, SMB1, SMD1, SMD2, SMD3, SMX2, SMX3, SNT309, SNU114, SPP2, SYF1, SYF2, RSE1 and YJU2.

It localises to the nucleus. Functionally, involved in pre-mRNA splicing. This is Pre-mRNA-splicing factor CWC24 (CWC24) from Saccharomyces cerevisiae (strain ATCC 204508 / S288c) (Baker's yeast).